We begin with the raw amino-acid sequence, 33 residues long: MSDIN-like toxin proprotein 5 (33 aa).

Residues 1 to 10 (MSDINATRLP) constitute a propeptide that is removed on maturation. The segment at residues 11-18 (IFWFIYFP) is a cross-link (cyclopeptide (Ile-Pro)). A propeptide spanning residues 19-32 (CVGDNVDNTLTRGE) is cleaved from the precursor.

The protein belongs to the MSDIN fungal toxin family. Processed by the macrocyclase-peptidase enzyme POPB to yield a toxic cyclic octapeptide. POPB first removes 10 residues from the N-terminus. Conformational trapping of the remaining peptide forces the enzyme to release this intermediate rather than proceed to macrocyclization. The enzyme rebinds the remaining peptide in a different conformation and catalyzes macrocyclization of the N-terminal 8 residues.

Probable toxin that belongs to the MSDIN-like toxin family responsible for a large number of food poisoning cases and deaths. The chain is MSDIN-like toxin proprotein 5 from Amanita phalloides (Death cap).